Reading from the N-terminus, the 476-residue chain is Propionyl-CoA carboxylase beta chain (476 aa).

The CoA carboxyltransferase N-terminal domain maps to 1-225 (MTILAPVTKS…QGEFDQRAAE (225 aa)). The interval 1-476 (MTILAPVTKS…VRARHKNIPL (476 aa)) is carboxyltransferase. A CoA carboxyltransferase C-terminal domain is found at 226-476 (LGDSDLRAMM…VRARHKNIPL (251 aa)). Residues 439-448 (CRNRRRRRGN) show a composition bias toward basic residues. A disordered region spans residues 439–476 (CRNRRRRRGNRPGEDSQHRHAALASAPSVRARHKNIPL).

Belongs to the AccD/PCCB family. In terms of assembly, probably a dodecamer composed of six biotin-containing alpha subunits and six beta subunits.

It carries out the reaction propanoyl-CoA + hydrogencarbonate + ATP = (S)-methylmalonyl-CoA + ADP + phosphate + H(+). It participates in metabolic intermediate metabolism; propanoyl-CoA degradation; succinyl-CoA from propanoyl-CoA: step 1/3. The protein is Propionyl-CoA carboxylase beta chain (pccB) of Rhodococcus erythropolis (Arthrobacter picolinophilus).